A 281-amino-acid chain; its full sequence is Pantothenate synthetase (281 aa).

Residue 30–37 (MGNLHQGH) coordinates ATP. The active-site Proton donor is the His37. Gln61 provides a ligand contact to (R)-pantoate. Position 61 (Gln61) interacts with beta-alanine. 149–152 (GRKD) provides a ligand contact to ATP. Position 155 (Gln155) interacts with (R)-pantoate. Residues Ile178 and 186 to 189 (MSSR) contribute to the ATP site.

Belongs to the pantothenate synthetase family. As to quaternary structure, homodimer.

The protein resides in the cytoplasm. It catalyses the reaction (R)-pantoate + beta-alanine + ATP = (R)-pantothenate + AMP + diphosphate + H(+). It functions in the pathway cofactor biosynthesis; (R)-pantothenate biosynthesis; (R)-pantothenate from (R)-pantoate and beta-alanine: step 1/1. Its function is as follows. Catalyzes the condensation of pantoate with beta-alanine in an ATP-dependent reaction via a pantoyl-adenylate intermediate. In Shewanella denitrificans (strain OS217 / ATCC BAA-1090 / DSM 15013), this protein is Pantothenate synthetase.